The chain runs to 462 residues: Zinc transporter zipt-7.2 (462 aa).

A helical transmembrane segment spans residues 2–22; sequence LVKSCIFLSFLAIAAYGQAHL. The segment at 39-134 is disordered; sequence HHQGHGHAHG…HGHSHGAESA (96 aa). Residues 40-51 are compositionally biased toward basic residues; the sequence is HQGHGHAHGGHG. Residues 65–74 show a composition bias toward low complexity; that stretch reads AAAAEAATAA. Positions 75–94 are enriched in basic and acidic residues; it reads AHDHGHAHDHDHGHAHDHGH. Basic residues predominate over residues 111 to 120; it reads HGHAHDHHGH. Over residues 121–132 the composition is skewed to basic and acidic residues; sequence SHEDHGHSHGAE. A helical membrane pass occupies residues 161–181; that stretch reads AISATLLISAAPCFILMFIPI. Residue Asn184 is glycosylated (N-linked (GlcNAc...) asparagine). A helical transmembrane segment spans residues 194 to 214; the sequence is VLLAFGSGGLLGDAFLHLIPH. Residues 219-239 are disordered; it reads GDGHGHSHSHGHSHGGGGHSH. Residues 244 to 264 traverse the membrane as a helical segment; the sequence is MSVGGWVLGGIIAFLTVEKLV. The segment at 270–307 is disordered; it reads EDGHGHSHGHSHGGEKKETKEKDSKDKVAKKEEKPEKD. Over residues 281 to 307 the composition is skewed to basic and acidic residues; sequence HGGEKKETKEKDSKDKVAKKEEKPEKD. N-linked (GlcNAc...) asparagine glycosylation occurs at Asn326. Transmembrane regions (helical) follow at residues 333–353, 376–396, and 410–430; these read IGAS…TVLV, AMLI…ISLF, and SWVL…SVIP. Residue Asn435 is glycosylated (N-linked (GlcNAc...) asparagine). A helical membrane pass occupies residues 441–461; the sequence is TVKEIFAILTGIFLMYLIAIY.

The protein belongs to the ZIP transporter (TC 2.A.5) family. KE4/Catsup subfamily. In terms of tissue distribution, expressed in somatic tissues.

It is found in the membrane. Zinc transporter. This is Zinc transporter zipt-7.2 from Caenorhabditis elegans.